The chain runs to 370 residues: ECF RNA polymerase sigma factor SigG (370 aa).

The interval 63 to 129 (EPYRRELLAH…LTALEGRRRR (67 aa)) is sigma-70 factor domain-2. Positions 85–88 (DLVQ) match the Polymerase core binding motif. Positions 180–232 (LAFVAALQHLSPRQRAVLLLRDVLQWKSAEVADAIGTSTVAVNSLLQRARSQL) are sigma-70 factor domain-4. The segment at residues 207–226 (SAEVADAIGTSTVAVNSLLQ) is a DNA-binding region (H-T-H motif).

Belongs to the sigma-70 factor family. ECF subfamily. Interacts transiently with the RNA polymerase catalytic core formed by RpoA, RpoB, RpoC and RpoZ (2 alpha, 1 beta, 1 beta' and 1 omega subunit) to form the RNA polymerase holoenzyme that can initiate transcription.

Sigma factors are initiation factors that promote the attachment of RNA polymerase to specific initiation sites and are then released. Extracytoplasmic function (ECF) sigma factors are held in an inactive form by a cognate anti-sigma factor until released, although no anti-sigma factor is known for this protein. May be involved in host intracellular survival after infection (strains H37Rv and CDC 1551). A role in the SOS response is controversial; it has been seen in strain CDC 1551 but not in H37Rv. The protein is ECF RNA polymerase sigma factor SigG (sigG) of Mycobacterium tuberculosis (strain CDC 1551 / Oshkosh).